Here is a 513-residue protein sequence, read N- to C-terminus: ATP synthase subunit alpha (513 aa).

169 to 176 serves as a coordination point for ATP; sequence GDRQVGKT.

It belongs to the ATPase alpha/beta chains family. As to quaternary structure, F-type ATPases have 2 components, CF(1) - the catalytic core - and CF(0) - the membrane proton channel. CF(1) has five subunits: alpha(3), beta(3), gamma(1), delta(1), epsilon(1). CF(0) has three main subunits: a(1), b(2) and c(9-12). The alpha and beta chains form an alternating ring which encloses part of the gamma chain. CF(1) is attached to CF(0) by a central stalk formed by the gamma and epsilon chains, while a peripheral stalk is formed by the delta and b chains.

It localises to the cell inner membrane. The enzyme catalyses ATP + H2O + 4 H(+)(in) = ADP + phosphate + 5 H(+)(out). Produces ATP from ADP in the presence of a proton gradient across the membrane. The alpha chain is a regulatory subunit. The polypeptide is ATP synthase subunit alpha (Aeromonas hydrophila subsp. hydrophila (strain ATCC 7966 / DSM 30187 / BCRC 13018 / CCUG 14551 / JCM 1027 / KCTC 2358 / NCIMB 9240 / NCTC 8049)).